The sequence spans 129 residues: Histone H2A-III (129 aa).

This sequence belongs to the histone H2A family. The nucleosome is a histone octamer containing two molecules each of H2A, H2B, H3 and H4 assembled in one H3-H4 heterotetramer and two H2A-H2B heterodimers. The octamer wraps approximately 147 bp of DNA.

It localises to the nucleus. The protein resides in the chromosome. Its function is as follows. Core component of nucleosome. Nucleosomes wrap and compact DNA into chromatin, limiting DNA accessibility to the cellular machineries which require DNA as a template. Histones thereby play a central role in transcription regulation, DNA repair, DNA replication and chromosomal stability. DNA accessibility is regulated via a complex set of post-translational modifications of histones, also called histone code, and nucleosome remodeling. The chain is Histone H2A-III from Volvox carteri (Green alga).